We begin with the raw amino-acid sequence, 124 residues long: Histone H2B, embryonic (124 aa).

The disordered stretch occupies residues 1–31; the sequence is MAPTAQVAKKGSKKAVKGTKTAXGGKKRNRK. S111 carries O-linked (GlcNAc) serine glycosylation. K119 is covalently cross-linked (Glycyl lysine isopeptide (Lys-Gly) (interchain with G-Cter in ubiquitin)).

It belongs to the histone H2B family. In terms of assembly, the nucleosome is a histone octamer containing two molecules each of H2A, H2B, H3 and H4 assembled in one H3-H4 heterotetramer and two H2A-H2B heterodimers. The octamer wraps approximately 147 bp of DNA. Post-translationally, monoubiquitination of Lys-119 gives a specific tag for epigenetic transcriptional activation and is also prerequisite for histone H3 'Lys-4' and 'Lys-79' methylation. In terms of processing, glcNAcylation at Ser-111 promotes monoubiquitination of Lys-119. It fluctuates in response to extracellular glucose, and associates with transcribed genes.

It localises to the nucleus. The protein resides in the chromosome. In terms of biological role, core component of nucleosome. Nucleosomes wrap and compact DNA into chromatin, limiting DNA accessibility to the cellular machineries which require DNA as a template. Histones thereby play a central role in transcription regulation, DNA repair, DNA replication and chromosomal stability. DNA accessibility is regulated via a complex set of post-translational modifications of histones, also called histone code, and nucleosome remodeling. This chain is Histone H2B, embryonic, found in Strongylocentrotus purpuratus (Purple sea urchin).